A 315-amino-acid polypeptide reads, in one-letter code: Ribosomal protein L11 methyltransferase (315 aa).

The S-adenosyl-L-methionine site is built by T164, G185, D207, and N250.

Belongs to the methyltransferase superfamily. PrmA family.

Its subcellular location is the cytoplasm. It catalyses the reaction L-lysyl-[protein] + 3 S-adenosyl-L-methionine = N(6),N(6),N(6)-trimethyl-L-lysyl-[protein] + 3 S-adenosyl-L-homocysteine + 3 H(+). Methylates ribosomal protein L11. In Exiguobacterium sibiricum (strain DSM 17290 / CCUG 55495 / CIP 109462 / JCM 13490 / 255-15), this protein is Ribosomal protein L11 methyltransferase.